A 314-amino-acid polypeptide reads, in one-letter code: uncharacterized protein (314 aa).

The interval 1–71 (MAGNSQRRGA…QRAGRKADET (71 aa)) is disordered. 3 residues coordinate S-adenosyl-L-methionine: Gly-266, Ile-286, and Leu-295.

It belongs to the class IV-like SAM-binding methyltransferase superfamily. RNA methyltransferase TrmH family.

This is an uncharacterized protein from Mycolicibacterium smegmatis (strain ATCC 700084 / mc(2)155) (Mycobacterium smegmatis).